Here is a 688-residue protein sequence, read N- to C-terminus: MKNYLLFEIGVEEMPSRFVGSTLEQLKNNLSKLFDENRIAFDKINAYGTPRRLTLVVEGLSDRQNDLEEEIKGPAKKIAVDAENNLTKPALGFIKSKGLSESDIYFKQVGKEEYIFATIKQDGKETSEVLKDILPETIKSVVFPKAMRWGGKNLKFARPIRWIVALLNDKVLEFDLEGIISSNVTKGHRFLGESTIEVDSIEDYFEKLEKNYIVLDQNKRKEMIRKQCIEVANSLGGEVEFDEDLLEEVTYLVEYPTAFYGEFDVDYIKLPKEVVITPMKQHQRYFPVLKEGKLLPNFIAVRNGDSYRIDNVKAGNEKVLEARLADALFFYREDTKRNLESYIEKLKTVVFQVKLGTIYDKTLRLEKLSADILDSLGLVDEKTDTIRAAKLSKADLVTGMVGEFDELQGFMGKEYAKVGGENDVVSEAIFEHYLPRFAGDILPKTNAGVALSIADKLDSIAGFFAIGIQPTGSQDPYALRRQALGILSILMDRKVAVDIKVLIEHALDNYSELDFDKEEVVEQIMNFFNERVKNLFKDLGIRYDVVDAVLSSDINDVSDMHMRALELNNWLEKDELVEMLTAFNRVSTLAQKAESDKIDESLLKEDAEIKLYNEFKQVKIKVNELLKDKKYGIALDEFASLRPVVDNLFDTVMVMDNDEAIKNNRLALLKQVYDTMLEICDLSKIVYK.

Belongs to the class-II aminoacyl-tRNA synthetase family. Tetramer of two alpha and two beta subunits.

It is found in the cytoplasm. It catalyses the reaction tRNA(Gly) + glycine + ATP = glycyl-tRNA(Gly) + AMP + diphosphate. This Clostridioides difficile (strain 630) (Peptoclostridium difficile) protein is Glycine--tRNA ligase beta subunit.